A 92-amino-acid polypeptide reads, in one-letter code: uncharacterized protein (92 aa).

This is an uncharacterized protein from Escherichia coli (strain K12).